Reading from the N-terminus, the 185-residue chain is MKNTYLTGYFPLIAILLFSSSLSISTSLYALKMLSSFGMYDGMLDYFSEKGIRLALFAAFALLYFMVLSALKLIANTVTELSLLFFANDPEGNNLKKLRMGSMIYLGGGILSFVLLQNVIWIVIWFAVVTLAYFVFTVYRIYSTLSLMSLVGFILLELLFWFTFVIGILFIFIKLYNSIMASLPV.

The next 5 helical transmembrane spans lie at 4-24, 54-74, 98-118, 119-139, and 153-173; these read TYLT…SLSI, LALF…LKLI, LRMG…LLQN, VIWI…FTVY, and FILL…FIFI.

The protein localises to the cell membrane. This is an uncharacterized protein from Bacillus subtilis (strain 168).